The primary structure comprises 39 residues: Protein MchX (39 aa).

The chain crosses the membrane as a helical span at residues 15 to 37 (SALSSTLLLSLIMSATLLEYSLS).

It is found in the cell inner membrane. In terms of biological role, required for microcin H47 production. Possibly involved in a regulatory loop modulating its own expression and that of MchI and MchB. This chain is Protein MchX (mchX), found in Escherichia coli.